Reading from the N-terminus, the 478-residue chain is Sulfate adenylyltransferase subunit 1 (478 aa).

The region spanning 28 to 244 (KTMLRFLTCG…LESVDVVNAR (217 aa)) is the tr-type G domain. The interval 37–44 (GSVDDGKS) is G1. Residue 37 to 44 (GSVDDGKS) coordinates GTP. The segment at 95 to 99 (GITID) is G2. Positions 116–119 (DTPG) are G3. GTP contacts are provided by residues 116–120 (DTPGH) and 171–174 (NKMD). Residues 171 to 174 (NKMD) are G4. Positions 209–211 (SAL) are G5.

Belongs to the TRAFAC class translation factor GTPase superfamily. Classic translation factor GTPase family. CysN/NodQ subfamily. Heterodimer composed of CysD, the smaller subunit, and CysN.

The catalysed reaction is sulfate + ATP + H(+) = adenosine 5'-phosphosulfate + diphosphate. It participates in sulfur metabolism; hydrogen sulfide biosynthesis; sulfite from sulfate: step 1/3. Its function is as follows. With CysD forms the ATP sulfurylase (ATPS) that catalyzes the adenylation of sulfate producing adenosine 5'-phosphosulfate (APS) and diphosphate, the first enzymatic step in sulfur assimilation pathway. APS synthesis involves the formation of a high-energy phosphoric-sulfuric acid anhydride bond driven by GTP hydrolysis by CysN coupled to ATP hydrolysis by CysD. The polypeptide is Sulfate adenylyltransferase subunit 1 (Yersinia pseudotuberculosis serotype O:1b (strain IP 31758)).